The following is a 508-amino-acid chain: Tyrosine decarboxylase 4 (508 aa).

Position 318 is an N6-(pyridoxal phosphate)lysine (lysine 318).

The protein belongs to the group II decarboxylase family. Homodimer. Pyridoxal 5'-phosphate is required as a cofactor.

It carries out the reaction L-tyrosine + H(+) = tyramine + CO2. This chain is Tyrosine decarboxylase 4 (TYRDC-4), found in Petroselinum crispum (Parsley).